The following is a 141-amino-acid chain: Hemoglobin subunit alpha-1/2/3 (141 aa).

The Globin domain occupies 1 to 141; that stretch reads VLSPADKTNV…VGTVLTSKYR (141 aa). Ser-3 is modified (phosphoserine). Position 7 is an N6-succinyllysine (Lys-7). At Thr-8 the chain carries Phosphothreonine. N6-succinyllysine is present on Lys-11. Lys-16 carries the N6-acetyllysine; alternate modification. Residue Lys-16 is modified to N6-succinyllysine; alternate. Tyr-24 is modified (phosphotyrosine). Ser-35 carries the post-translational modification Phosphoserine. An N6-succinyllysine modification is found at Lys-40. A Phosphoserine modification is found at Ser-49. His-58 is a binding site for O2. A heme b-binding site is contributed by His-87. At Ser-102 the chain carries Phosphoserine. Phosphothreonine is present on Thr-108. 2 positions are modified to phosphoserine: Ser-124 and Ser-131. Thr-134 and Thr-137 each carry phosphothreonine. At Ser-138 the chain carries Phosphoserine.

The protein belongs to the globin family. Heterotetramer of two alpha chains and two beta chains. In terms of tissue distribution, red blood cells.

In terms of biological role, involved in oxygen transport from the lung to the various peripheral tissues. This Macaca nemestrina (Pig-tailed macaque) protein is Hemoglobin subunit alpha-1/2/3.